The following is a 166-amino-acid chain: Emerin homolog 1 (166 aa).

Residues 1 to 44 enclose the LEM domain; the sequence is MDVSQLTDAELRDSLKSHGVSVGPIVATTRKLYEKKLIKLSDGS. Topologically, residues 1 to 127 are nuclear; that stretch reads MDVSQLTDAE…QAQSNKGGFL (127 aa). Residues 62-99 form a disordered region; it reads IISSSPKKSPPQRVFQNVSAATAAATTSPESDSDDCEE. The chain crosses the membrane as a helical span at residues 128 to 148; sequence GSTITFTILFVFIAVFAYFLI. The Perinuclear space portion of the chain corresponds to 149–166; the sequence is ENAEQLKLVAETNPEDTI.

As to quaternary structure, interacts with lmn-1 and baf-1. In terms of tissue distribution, ubiquitous. Expressed in all cells, except in cells undergoing spermatogenesis. High expression in hypodermis, neurons, pharyngeal muscle, body wall muscle and gonadal sheath.

Its subcellular location is the nucleus inner membrane. It localises to the nucleus envelope. In terms of biological role, nuclear lamina-associated inner nuclear membrane protein that is involved in cell division, nuclear structure organization, maintenance of nuclear envelope integrity and nuclear envelope reformation after mitosis. Involved in chromosome segregation and cell division, probably via its interaction with the nuclear intermediate filament protein lmn-1, the main component of nuclear lamina. Required to organize the distribution of lmn-1, nuclear pore complexes (NPCs) and chromatin in mitotically active cells. Together with lem-2, plays a role in baf-1 enrichment at the nuclear envelope in anaphase. Together with lem-2, involved in muscle cell attachment to hypodermal cells, as well as muscle cell location and sarcomere organization. May play a role in radiation-induced DNA damage repair response. May repress binding of transcription factor pha-4 with target sequences in pharyngeal cells. The sequence is that of Emerin homolog 1 (emr-1) from Caenorhabditis elegans.